Consider the following 81-residue polypeptide: ATP synthase subunit c (81 aa).

2 helical membrane-spanning segments follow: residues 6 to 26 and 57 to 77; these read AAAS…GPGF and LAFM…LLFA.

Belongs to the ATPase C chain family. In terms of assembly, F-type ATPases have 2 components, F(1) - the catalytic core - and F(0) - the membrane proton channel. F(1) has five subunits: alpha(3), beta(3), gamma(1), delta(1), epsilon(1). F(0) has four main subunits: a(1), b(1), b'(1) and c(10-14). The alpha and beta chains form an alternating ring which encloses part of the gamma chain. F(1) is attached to F(0) by a central stalk formed by the gamma and epsilon chains, while a peripheral stalk is formed by the delta, b and b' chains.

Its subcellular location is the cellular thylakoid membrane. Its function is as follows. F(1)F(0) ATP synthase produces ATP from ADP in the presence of a proton or sodium gradient. F-type ATPases consist of two structural domains, F(1) containing the extramembraneous catalytic core and F(0) containing the membrane proton channel, linked together by a central stalk and a peripheral stalk. During catalysis, ATP synthesis in the catalytic domain of F(1) is coupled via a rotary mechanism of the central stalk subunits to proton translocation. Key component of the F(0) channel; it plays a direct role in translocation across the membrane. A homomeric c-ring of between 10-14 subunits forms the central stalk rotor element with the F(1) delta and epsilon subunits. The protein is ATP synthase subunit c of Rippkaea orientalis (strain PCC 8801 / RF-1) (Cyanothece sp. (strain PCC 8801)).